Here is a 20-residue protein sequence, read N- to C-terminus: Phenol-soluble modulin alpha 4 peptide (20 aa).

This sequence belongs to the phenol-soluble modulin alpha peptides family.

In terms of biological role, peptide which can recruit, activate and subsequently lyse neutrophils, thus eliminating the main cellular defense against infection. In Staphylococcus aureus (strain bovine RF122 / ET3-1), this protein is Phenol-soluble modulin alpha 4 peptide (psmA4).